A 250-amino-acid polypeptide reads, in one-letter code: 5'-nucleotidase SurE (250 aa).

Asp9, Asp10, Ser40, and Asn92 together coordinate a divalent metal cation.

This sequence belongs to the SurE nucleotidase family. A divalent metal cation is required as a cofactor.

It localises to the cytoplasm. The enzyme catalyses a ribonucleoside 5'-phosphate + H2O = a ribonucleoside + phosphate. Nucleotidase that shows phosphatase activity on nucleoside 5'-monophosphates. The sequence is that of 5'-nucleotidase SurE from Shewanella pealeana (strain ATCC 700345 / ANG-SQ1).